A 307-amino-acid polypeptide reads, in one-letter code: tRNA dimethylallyltransferase (307 aa).

9–16 (GPTAVGKT) lines the ATP pocket. 11–16 (TAVGKT) lines the substrate pocket. Positions 34–37 (DSMQ) are interaction with substrate tRNA.

This sequence belongs to the IPP transferase family. As to quaternary structure, monomer. Mg(2+) is required as a cofactor.

It carries out the reaction adenosine(37) in tRNA + dimethylallyl diphosphate = N(6)-dimethylallyladenosine(37) in tRNA + diphosphate. Catalyzes the transfer of a dimethylallyl group onto the adenine at position 37 in tRNAs that read codons beginning with uridine, leading to the formation of N6-(dimethylallyl)adenosine (i(6)A). The protein is tRNA dimethylallyltransferase of Limosilactobacillus fermentum (strain NBRC 3956 / LMG 18251) (Lactobacillus fermentum).